The chain runs to 240 residues: Uridylate kinase (240 aa).

14 to 17 provides a ligand contact to ATP; it reads KLSG. G56 is a binding site for UMP. ATP-binding residues include G57 and R61. UMP-binding positions include D76 and 137-144; that span reads TGNPFFTT. Residues T164, Y170, and D173 each contribute to the ATP site.

The protein belongs to the UMP kinase family. In terms of assembly, homohexamer.

The protein localises to the cytoplasm. The enzyme catalyses UMP + ATP = UDP + ADP. The protein operates within pyrimidine metabolism; CTP biosynthesis via de novo pathway; UDP from UMP (UMPK route): step 1/1. Its activity is regulated as follows. Inhibited by UTP. In terms of biological role, catalyzes the reversible phosphorylation of UMP to UDP. In Albidiferax ferrireducens (strain ATCC BAA-621 / DSM 15236 / T118) (Rhodoferax ferrireducens), this protein is Uridylate kinase.